The primary structure comprises 316 residues: Holliday junction branch migration complex subunit RuvB (316 aa).

The interval 1-165 is large ATPase domain (RuvB-L); sequence MQITRPHNFE…FGYIARFVSY (165 aa). ATP-binding positions include arginine 5, glycine 46, lysine 49, threonine 50, serine 51, 112-114, arginine 155, tyrosine 165, and arginine 202; that span reads EDF. Residue threonine 50 coordinates Mg(2+). Residues 166–236 are small ATPAse domain (RuvB-S); it reads NAEDMKQIIR…IIKKTFKSLD (71 aa). The interval 239 to 316 is head domain (RuvB-H); it reads EYGLTKDHVE…TYLLKEKLIW (78 aa). 2 residues coordinate DNA: lysine 294 and arginine 299.

The protein belongs to the RuvB family. As to quaternary structure, homohexamer. Forms an RuvA(8)-RuvB(12)-Holliday junction (HJ) complex. HJ DNA is sandwiched between 2 RuvA tetramers; dsDNA enters through RuvA and exits via RuvB. An RuvB hexamer assembles on each DNA strand where it exits the tetramer. Each RuvB hexamer is contacted by two RuvA subunits (via domain III) on 2 adjacent RuvB subunits; this complex drives branch migration. In the full resolvosome a probable DNA-RuvA(4)-RuvB(12)-RuvC(2) complex forms which resolves the HJ.

Its subcellular location is the cytoplasm. It catalyses the reaction ATP + H2O = ADP + phosphate + H(+). Functionally, the RuvA-RuvB-RuvC complex processes Holliday junction (HJ) DNA during genetic recombination and DNA repair, while the RuvA-RuvB complex plays an important role in the rescue of blocked DNA replication forks via replication fork reversal (RFR). RuvA specifically binds to HJ cruciform DNA, conferring on it an open structure. The RuvB hexamer acts as an ATP-dependent pump, pulling dsDNA into and through the RuvAB complex. RuvB forms 2 homohexamers on either side of HJ DNA bound by 1 or 2 RuvA tetramers; 4 subunits per hexamer contact DNA at a time. Coordinated motions by a converter formed by DNA-disengaged RuvB subunits stimulates ATP hydrolysis and nucleotide exchange. Immobilization of the converter enables RuvB to convert the ATP-contained energy into a lever motion, pulling 2 nucleotides of DNA out of the RuvA tetramer per ATP hydrolyzed, thus driving DNA branch migration. The RuvB motors rotate together with the DNA substrate, which together with the progressing nucleotide cycle form the mechanistic basis for DNA recombination by continuous HJ branch migration. Branch migration allows RuvC to scan DNA until it finds its consensus sequence, where it cleaves and resolves cruciform DNA. The polypeptide is Holliday junction branch migration complex subunit RuvB (Mycoplasmopsis synoviae (strain 53) (Mycoplasma synoviae)).